A 1068-amino-acid chain; its full sequence is Carbamoyl phosphate synthase large chain (1068 aa).

Residues 1-401 (MPRNNDIKKV…ALMKAIRSLE (401 aa)) are carboxyphosphate synthetic domain. ATP contacts are provided by Arg129, Arg169, Gly175, Gly176, Arg208, Ile210, Glu215, Gly241, Val242, His243, Gln284, and Glu298. The ATP-grasp 1 domain maps to 133-327 (KDTMEKIGEP…IAKVTAKIAL (195 aa)). Mg(2+) is bound by residues Gln284, Glu298, and Asn300. 3 residues coordinate Mn(2+): Gln284, Glu298, and Asn300. The tract at residues 402–546 (QHVDSLMSYD…YSVFGSENEA (145 aa)) is oligomerization domain. Residues 547–930 (AETNPQKKVL…ALYKAFEGAG (384 aa)) form a carbamoyl phosphate synthetic domain region. One can recognise an ATP-grasp 2 domain in the interval 672-862 (DEILQKTGIP…IVDLAARIIM (191 aa)). The ATP site is built by Arg708, Lys747, Leu749, Glu753, Gly778, Val779, His780, Ser781, Gln821, and Glu833. Residues Gln821, Glu833, and Asn835 each coordinate Mg(2+). Mn(2+)-binding residues include Gln821, Glu833, and Asn835. In terms of domain architecture, MGS-like spans 931–1068 (VELPKYKQMI…PVDIATVKNL (138 aa)). An allosteric domain region spans residues 931 to 1068 (VELPKYKQMI…PVDIATVKNL (138 aa)).

Belongs to the CarB family. Composed of two chains; the small (or glutamine) chain promotes the hydrolysis of glutamine to ammonia, which is used by the large (or ammonia) chain to synthesize carbamoyl phosphate. Tetramer of heterodimers (alpha,beta)4. It depends on Mg(2+) as a cofactor. Mn(2+) is required as a cofactor.

It carries out the reaction hydrogencarbonate + L-glutamine + 2 ATP + H2O = carbamoyl phosphate + L-glutamate + 2 ADP + phosphate + 2 H(+). It catalyses the reaction hydrogencarbonate + NH4(+) + 2 ATP = carbamoyl phosphate + 2 ADP + phosphate + 2 H(+). Its pathway is amino-acid biosynthesis; L-arginine biosynthesis; carbamoyl phosphate from bicarbonate: step 1/1. It functions in the pathway pyrimidine metabolism; UMP biosynthesis via de novo pathway; (S)-dihydroorotate from bicarbonate: step 1/3. Its function is as follows. Large subunit of the glutamine-dependent carbamoyl phosphate synthetase (CPSase). CPSase catalyzes the formation of carbamoyl phosphate from the ammonia moiety of glutamine, carbonate, and phosphate donated by ATP, constituting the first step of 2 biosynthetic pathways, one leading to arginine and/or urea and the other to pyrimidine nucleotides. The large subunit (synthetase) binds the substrates ammonia (free or transferred from glutamine from the small subunit), hydrogencarbonate and ATP and carries out an ATP-coupled ligase reaction, activating hydrogencarbonate by forming carboxy phosphate which reacts with ammonia to form carbamoyl phosphate. In Agathobacter rectalis (strain ATCC 33656 / DSM 3377 / JCM 17463 / KCTC 5835 / VPI 0990) (Eubacterium rectale), this protein is Carbamoyl phosphate synthase large chain.